Here is a 109-residue protein sequence, read N- to C-terminus: Nucleoid-associated protein PC1_1077 (109 aa).

The protein belongs to the YbaB/EbfC family. Homodimer.

Its subcellular location is the cytoplasm. It is found in the nucleoid. Binds to DNA and alters its conformation. May be involved in regulation of gene expression, nucleoid organization and DNA protection. The sequence is that of Nucleoid-associated protein PC1_1077 from Pectobacterium carotovorum subsp. carotovorum (strain PC1).